Reading from the N-terminus, the 547-residue chain is MAAKDVKFDTDARDRMLRGVNILADAVKVTLGPKGRNVVIDKSFGAPRITKDGVSVAKEIELSDKFENMGAQMVKEVASRTNDEAGDGTTTATVLAQAIIKEGLKAVAAGMNPMDLKRGIDLATSKVVEAIKAAARPVNDSHEVAQVGTISANGEAQIGRFIAEAMQKVGNEGVITVEENKGLETEVEVVEGMQFDRGYLSPYFVTNADKMTAELDDVYILLHEKKLSSLQPMVPLLEAVIQSQKPLLIIAEDVEGEALATLVVNKLRGGLKIAAVKAPGFGDRRKAMLQDIAILTGGQVISEDLGMKLENVTIDMLGRAKKISINKDNTTIVDGNGDKAEIDARVAQIRNQIEETSSDYDREKLQERVAKLAGGVAVIRVGGMTEVEVKERKDRVDDALNATRAAVQEGIVVGGGVALIQGGKALDGLTGENPDQNAGITIVRRALEAPLRQIAQNAGVDGSVVAGKVRESNEKSFGFNAQTEEYGDMFKFGVIDPAKVVRTALEDAASVASLLITTEAMIADKPEPKSPAGGPGMGGMGGMDGMM.

Residues 30–33 (TLGP), Lys51, 87–91 (DGTTT), Gly415, and Asp496 contribute to the ATP site. The tract at residues 525 to 547 (KPEPKSPAGGPGMGGMGGMDGMM) is disordered. Residues 533-547 (GGPGMGGMGGMDGMM) show a composition bias toward gly residues.

Belongs to the chaperonin (HSP60) family. Forms a cylinder of 14 subunits composed of two heptameric rings stacked back-to-back. Interacts with the co-chaperonin GroES.

Its subcellular location is the cytoplasm. The enzyme catalyses ATP + H2O + a folded polypeptide = ADP + phosphate + an unfolded polypeptide.. Its function is as follows. Together with its co-chaperonin GroES, plays an essential role in assisting protein folding. The GroEL-GroES system forms a nano-cage that allows encapsulation of the non-native substrate proteins and provides a physical environment optimized to promote and accelerate protein folding. The chain is Chaperonin GroEL from Cereibacter sphaeroides (strain ATCC 17029 / ATH 2.4.9) (Rhodobacter sphaeroides).